The following is a 421-amino-acid chain: 4-hydroxy-3-methylbut-2-en-1-yl diphosphate synthase (flavodoxin) (421 aa).

Positions 298, 301, 344, and 351 each coordinate [4Fe-4S] cluster.

The protein belongs to the IspG family. It depends on [4Fe-4S] cluster as a cofactor.

It catalyses the reaction (2E)-4-hydroxy-3-methylbut-2-enyl diphosphate + oxidized [flavodoxin] + H2O + 2 H(+) = 2-C-methyl-D-erythritol 2,4-cyclic diphosphate + reduced [flavodoxin]. Its pathway is isoprenoid biosynthesis; isopentenyl diphosphate biosynthesis via DXP pathway; isopentenyl diphosphate from 1-deoxy-D-xylulose 5-phosphate: step 5/6. Functionally, converts 2C-methyl-D-erythritol 2,4-cyclodiphosphate (ME-2,4cPP) into 1-hydroxy-2-methyl-2-(E)-butenyl 4-diphosphate. This Neisseria gonorrhoeae (strain ATCC 700825 / FA 1090) protein is 4-hydroxy-3-methylbut-2-en-1-yl diphosphate synthase (flavodoxin).